The following is a 452-amino-acid chain: MQRRIMGIETEFGVTCTFHGHRRLSPDEVARYLFRRVVSWGRSSNVFLRNGARLYLDVGSHPEYATAECDSLIQLVNHDRAGERVLEELLIDAEARLAEEGIGGDIYLFKNNTDSAGNSYGCHENFLVARAGEFSRISDVLLPFLVTRQLICGAGKVLQTPKAATFCLSQRAEHIWEGVSSATTRSRPIINTRDEPHADAEKYRRLHVIVGDSNMAETTTMLKVGSAALVLEMIEAGVSFRDFALDNPIRAIREVSHDVTGKKPVRLAGGRQASALDIQREYHAKAVEHLRNREPDPQVEQVVDLWGRTLDAVEAQDFAKVDTEIDWVIKRKLFQRYQDRHGFDLSDPKIAQLDLAYHDIKRGRGVFDVLQRKGLVKRVTEDETIDDAVENPPQTTRAKLRGDFITAAQAAGRDFTVDWVHLKLNDQAQRTVLCKDPFRSVDERVERLIASM.

Residue E9 participates in Mg(2+) binding. Residue R53 coordinates ATP. Y55 is a Mg(2+) binding site. Residue D57 is the Proton acceptor of the active site. E63 provides a ligand contact to Mg(2+). ATP-binding residues include T66 and W419.

Belongs to the Pup ligase/Pup deamidase family. Pup-conjugating enzyme subfamily.

The catalysed reaction is ATP + [prokaryotic ubiquitin-like protein]-L-glutamate + [protein]-L-lysine = ADP + phosphate + N(6)-([prokaryotic ubiquitin-like protein]-gamma-L-glutamyl)-[protein]-L-lysine.. It participates in protein degradation; proteasomal Pup-dependent pathway. The protein operates within protein modification; protein pupylation. Functionally, catalyzes the covalent attachment of the prokaryotic ubiquitin-like protein modifier Pup to the proteasomal substrate proteins, thereby targeting them for proteasomal degradation. This tagging system is termed pupylation. The ligation reaction involves the side-chain carboxylate of the C-terminal glutamate of Pup and the side-chain amino group of a substrate lysine. This chain is Pup--protein ligase, found in Rhodococcus erythropolis (strain PR4 / NBRC 100887).